Here is a 152-residue protein sequence, read N- to C-terminus: Putative pre-16S rRNA nuclease (152 aa).

The protein belongs to the YqgF nuclease family.

It is found in the cytoplasm. Functionally, could be a nuclease involved in processing of the 5'-end of pre-16S rRNA. The protein is Putative pre-16S rRNA nuclease of Sphingopyxis alaskensis (strain DSM 13593 / LMG 18877 / RB2256) (Sphingomonas alaskensis).